The chain runs to 397 residues: Elongation factor Tu (397 aa).

The 197-residue stretch at 10–206 (KPHVNIGTIG…AVDEAIPTPP (197 aa)) folds into the tr-type G domain. Residues 19–26 (GHIDHGKT) are G1. 19 to 26 (GHIDHGKT) contributes to the GTP binding site. Position 26 (T26) interacts with Mg(2+). A G2 region spans residues 62 to 66 (GITIS). Positions 83–86 (DCPG) are G3. GTP-binding positions include 83–87 (DCPGH) and 138–141 (NKAD). Positions 138 to 141 (NKAD) are G4. A G5 region spans residues 176–178 (SAL).

It belongs to the TRAFAC class translation factor GTPase superfamily. Classic translation factor GTPase family. EF-Tu/EF-1A subfamily. As to quaternary structure, monomer.

Its subcellular location is the cytoplasm. It catalyses the reaction GTP + H2O = GDP + phosphate + H(+). GTP hydrolase that promotes the GTP-dependent binding of aminoacyl-tRNA to the A-site of ribosomes during protein biosynthesis. This Kitasatospora aureofaciens (Streptomyces aureofaciens) protein is Elongation factor Tu.